The following is a 346-amino-acid chain: D-alanine--D-alanine ligase (346 aa).

One can recognise an ATP-grasp domain in the interval 133 to 327 (KLYAKSVGVK…ALADQISLEK (195 aa)). 159–211 (LSFPCIIKPARLGSSIGISIVKDEKDLEYAKDVGFEFDNDLVVEEFKNNIKEY) contributes to the ATP binding site. The Mg(2+) site is built by Asp-284, Glu-296, and Asn-298.

Belongs to the D-alanine--D-alanine ligase family. Mg(2+) serves as cofactor. Mn(2+) is required as a cofactor.

The protein resides in the cytoplasm. It catalyses the reaction 2 D-alanine + ATP = D-alanyl-D-alanine + ADP + phosphate + H(+). Its pathway is cell wall biogenesis; peptidoglycan biosynthesis. Its function is as follows. Cell wall formation. This Campylobacter jejuni subsp. jejuni serotype O:23/36 (strain 81-176) protein is D-alanine--D-alanine ligase.